A 211-amino-acid chain; its full sequence is Transcription antitermination protein NusB (211 aa).

The segment at 152-211 (PAKKERVANPFPSTPPKKPENVPNPFSTPFKKNSSEPIRNPFEGNKSPQPPQKTLRRKKK) is disordered. Polar residues predominate over residues 175–188 (NPFSTPFKKNSSEP).

This sequence belongs to the NusB family.

In terms of biological role, involved in transcription antitermination. Required for transcription of ribosomal RNA (rRNA) genes. Binds specifically to the boxA antiterminator sequence of the ribosomal RNA (rrn) operons. The polypeptide is Transcription antitermination protein NusB (Chloroherpeton thalassium (strain ATCC 35110 / GB-78)).